Here is a 349-residue protein sequence, read N- to C-terminus: Ribosomal RNA small subunit methyltransferase H (349 aa).

S-adenosyl-L-methionine-binding positions include 34–36, D54, F81, D102, and Q109; that span reads GGH.

This sequence belongs to the methyltransferase superfamily. RsmH family.

Its subcellular location is the cytoplasm. The catalysed reaction is cytidine(1402) in 16S rRNA + S-adenosyl-L-methionine = N(4)-methylcytidine(1402) in 16S rRNA + S-adenosyl-L-homocysteine + H(+). Its function is as follows. Specifically methylates the N4 position of cytidine in position 1402 (C1402) of 16S rRNA. The polypeptide is Ribosomal RNA small subunit methyltransferase H (Dehalococcoides mccartyi (strain ATCC BAA-2266 / KCTC 15142 / 195) (Dehalococcoides ethenogenes (strain 195))).